Reading from the N-terminus, the 220-residue chain is Elongation factor Ts, chloroplastic (220 aa).

Belongs to the EF-Ts family.

The protein localises to the plastid. It is found in the chloroplast. Functionally, associates with the EF-Tu.GDP complex and induces the exchange of GDP to GTP. It remains bound to the aminoacyl-tRNA.EF-Tu.GTP complex up to the GTP hydrolysis stage on the ribosome. This is Elongation factor Ts, chloroplastic (tsf) from Porphyra purpurea (Red seaweed).